The following is a 763-amino-acid chain: Thyrotropin receptor (763 aa).

Residues 1–21 (MRQTPLLQLALLLSLPRSLGG) form the signal peptide. Residues 22–412 (KGCPSPPCEC…EFNPCEDIMG (391 aa)) lie on the Extracellular side of the membrane. A disulfide bond links cysteine 31 and cysteine 41. Residues asparagine 77 and asparagine 99 are each glycosylated (N-linked (GlcNAc...) asparagine). LRR repeat units follow at residues 100–124 (LSKMTHIEIRNTRSLTYIDPGALKE), 125–150 (LPLLKFLGIFNTGLGVFPDLTKVYST), 151–174 (DVFFILEITDNPYMTSIPANAFQG), 176–199 (CNETLTLKLYNNGFTSIQGHAFNG), 201–223 (KLDAVYLNKNKYLTAIDQDAFGG), 225–248 (YSGPTLLDVSYTSVTALPSKGLEH), and 264–288 (PLTLSFLHLTRADLSYPSHCCAFKN). N-linked (GlcNAc...) asparagine glycosylation is found at asparagine 177 and asparagine 198. Asparagine 302 is a glycosylation site (N-linked (GlcNAc...) asparagine). At tyrosine 384 the chain carries Sulfotyrosine. Residues 413–440 (YKFLRIVVWFVSLLALLGNVFVLIILLT) traverse the membrane as a helical segment. Residues 441-449 (SHYKLTVPR) lie on the Cytoplasmic side of the membrane. A helical transmembrane segment spans residues 450-472 (FLMCNLAFADFCMGMYLLLIASV). Residues 473–493 (DLYTHSEYYNHAIDWQTGPGC) are Extracellular-facing. An intrachain disulfide couples cysteine 493 to cysteine 568. The helical transmembrane segment at 494–516 (NAAGFFTVFASELSVYTLTVITL) threads the bilayer. The Cytoplasmic segment spans residues 517–536 (ERWYAITFAMRLDRKMRLRH). A helical transmembrane segment spans residues 537 to 559 (AYAIMVGGWVCCFLLALLPLVGI). Residues 560–579 (SSYAKVSICLPMDTETPLAL) lie on the Extracellular side of the membrane. A helical transmembrane segment spans residues 580–601 (AYIILVLLLNIVAFIIVCSCYV). The Cytoplasmic segment spans residues 602–624 (KIYITVRNPQYNTGDKDTKIAKR). Residues 625–648 (MAVLIFTDFMCMAPISFYALSALM) traverse the membrane as a helical segment. Residues 649–659 (NKPLITVTNSK) lie on the Extracellular side of the membrane. Residues 660–681 (ILLVLFYPLNSCANPFLYAIFT) traverse the membrane as a helical segment. At 682 to 763 (KTFQRDVFIL…ISKEYNQTVL (82 aa)) the chain is on the cytoplasmic side. The short motif at 761–763 (TVL) is the PDZ-binding element.

This sequence belongs to the G-protein coupled receptor 1 family. FSH/LSH/TSH subfamily. Interacts with heterodimer GPHA2:GPHB5; this interaction stimulates cAMP production. Interacts (via the PDZ-binding motif) with SCRIB; regulates TSHR trafficking and function. Post-translationally, glycosylated. In terms of processing, sulfated. Sulfation on Tyr-384 plays a role in thyrotropin receptor binding and activation.

The protein resides in the cell membrane. Its subcellular location is the basolateral cell membrane. Its function is as follows. Receptor for the thyroid-stimulating hormone (TSH) or thyrotropin. Also acts as a receptor for the heterodimeric glycoprotein hormone (GPHA2:GPHB5) or thyrostimulin. The activity of this receptor is mediated by G proteins which activate adenylate cyclase. Plays a central role in controlling thyroid cell metabolism. The chain is Thyrotropin receptor (TSHR) from Felis catus (Cat).